The primary structure comprises 276 residues: N-acetylmuramoyl-L-alanine amidase AmiD (276 aa).

The first 16 residues, 1 to 16, serve as a signal peptide directing secretion; sequence MRRFFWLVAAALLLAG. A lipid anchor (N-palmitoyl cysteine) is attached at cysteine 17. The S-diacylglycerol cysteine moiety is linked to residue cysteine 17. The 138-residue stretch at 42–179 folds into the N-acetylmuramoyl-L-alanine amidase domain; the sequence is PRIKVLVIHY…APQRKDDPGP (138 aa). Histidine 50 is a binding site for Zn(2+). Residue 51-52 participates in substrate binding; that stretch reads YT. The active-site Proton acceptor is the glutamate 119. Zn(2+) contacts are provided by histidine 166 and aspartate 176.

It belongs to the N-acetylmuramoyl-L-alanine amidase 2 family. Zn(2+) serves as cofactor.

It is found in the cell outer membrane. It catalyses the reaction Hydrolyzes the link between N-acetylmuramoyl residues and L-amino acid residues in certain cell-wall glycopeptides.. This chain is N-acetylmuramoyl-L-alanine amidase AmiD (amiD), found in Escherichia coli (strain K12).